Reading from the N-terminus, the 355-residue chain is uncharacterized protein (355 aa).

The N-terminal 49 residues, 1–49 (MPMTVVSGRFSTALLPTCFSLSRLHSVKYAAQRRVVFVSRSAHASSASV), are a transit peptide targeting the chloroplast.

The protein belongs to the methyltransferase superfamily.

The protein localises to the plastid. It is found in the chloroplast. It localises to the plastoglobule. This is an uncharacterized protein from Arabidopsis thaliana (Mouse-ear cress).